The sequence spans 437 residues: AA9 family lytic polysaccharide monooxygenase H (437 aa).

An N-terminal signal peptide occupies residues 1–21; it reads MNLSLFTLALVACYSSQLAAA. Residue histidine 22 participates in Cu(2+) binding. Cysteines 64 and 193 form a disulfide. Residues asparagine 67 and asparagine 79 are each glycosylated (N-linked (GlcNAc...) asparagine). Histidine 104 contributes to the Cu(2+) binding site. N-linked (GlcNAc...) asparagine glycans are attached at residues asparagine 120 and asparagine 138. Residues histidine 178 and glutamine 188 each coordinate O2. Position 190 (tyrosine 190) interacts with Cu(2+). Residues asparagine 252 and asparagine 307 are each glycosylated (N-linked (GlcNAc...) asparagine). The Chitin-binding type-1 domain occupies 392-437; the sequence is DGKCGDGNGQTCKGSLLGECCSQVGYCGSSESYCGVGCQGNFGVCG. Intrachain disulfides connect cysteine 395–cysteine 412, cysteine 403–cysteine 418, cysteine 411–cysteine 425, and cysteine 429–cysteine 436.

It belongs to the polysaccharide monooxygenase AA9 family. Cu(2+) serves as cofactor.

It localises to the secreted. It catalyses the reaction [(1-&gt;4)-beta-D-glucosyl]n+m + reduced acceptor + O2 = 4-dehydro-beta-D-glucosyl-[(1-&gt;4)-beta-D-glucosyl]n-1 + [(1-&gt;4)-beta-D-glucosyl]m + acceptor + H2O.. Lytic polysaccharide monooxygenase (LPMO) that depolymerizes crystalline and amorphous polysaccharides via the oxidation of scissile alpha- or beta-(1-4)-glycosidic bonds, yielding C1 and C4 oxidation products. Catalysis by LPMOs requires the reduction of the active-site copper from Cu(II) to Cu(I) by a reducing agent and H(2)O(2) or O(2) as a cosubstrate. This Botryotinia fuckeliana (strain B05.10) (Noble rot fungus) protein is AA9 family lytic polysaccharide monooxygenase H.